A 173-amino-acid chain; its full sequence is Alpha-crystallin A chain (173 aa).

Met1 carries the post-translational modification N-acetylmethionine. The required for complex formation with BFSP1 and BFSP2 stretch occupies residues 1-63 (MDIAIQHPWF…RTVLDSGISE (63 aa)). A Deamidated glutamine; partial modification is found at Gln6. Ser45 carries the post-translational modification Phosphoserine. Gln50 carries the deamidated glutamine; partial modification. Positions 52–162 (LFRTVLDSGI…GHSERAIPVS (111 aa)) constitute a sHSP domain. An N6-acetyllysine modification is found at Lys70. Position 90 is a deamidated glutamine; partial (Gln90). Lys99 bears the N6-acetyllysine mark. His100 contributes to the Zn(2+) binding site. A Deamidated asparagine; partial modification is found at Asn101. Zn(2+)-binding residues include Glu102 and His107. A Phosphoserine modification is found at Ser122. Asn123 carries the post-translational modification Deamidated asparagine; partial. The segment at 144–173 (PKIPSGVDAGHSERAIPVSREEKPSSAPSS) is disordered. The span at 153-167 (GHSERAIPVSREEKP) shows a compositional bias: basic and acidic residues. His154 contributes to the Zn(2+) binding site. A glycan (O-linked (GlcNAc) serine) is linked at Ser162.

The protein belongs to the small heat shock protein (HSP20) family. Heteromer composed of three CRYAA and one CRYAB subunits. Inter-subunit bridging via zinc ions enhances stability, which is crucial as there is no protein turn over in the lens. Can also form homodimers and homotetramers (dimers of dimers) which serve as the building blocks of homooligomers. Within homooligomers, the zinc-binding motif is created from residues of 3 different molecules. His-100 and Glu-102 from one molecule are ligands of the zinc ion, and His-107 and His-154 residues from additional molecules complete the site with tetrahedral coordination geometry. Part of a complex required for lens intermediate filament formation composed of BFSP1, BFSP2 and CRYAA. Post-translationally, acetylation at Lys-70 may increase chaperone activity. Undergoes age-dependent proteolytical cleavage at the C-terminus.

It localises to the cytoplasm. Its subcellular location is the nucleus. Contributes to the transparency and refractive index of the lens. Acts as a chaperone, preventing aggregation of various proteins under a wide range of stress conditions. Required for the correct formation of lens intermediate filaments as part of a complex composed of BFSP1, BFSP2 and CRYAA. This Giraffa camelopardalis (Giraffe) protein is Alpha-crystallin A chain (CRYAA).